The following is a 376-amino-acid chain: Lipid-A-disaccharide synthase (376 aa).

This sequence belongs to the LpxB family.

It carries out the reaction a lipid X + a UDP-2-N,3-O-bis[(3R)-3-hydroxyacyl]-alpha-D-glucosamine = a lipid A disaccharide + UDP + H(+). Its pathway is bacterial outer membrane biogenesis; LPS lipid A biosynthesis. Condensation of UDP-2,3-diacylglucosamine and 2,3-diacylglucosamine-1-phosphate to form lipid A disaccharide, a precursor of lipid A, a phosphorylated glycolipid that anchors the lipopolysaccharide to the outer membrane of the cell. In Coxiella burnetii (strain CbuK_Q154) (Coxiella burnetii (strain Q154)), this protein is Lipid-A-disaccharide synthase.